We begin with the raw amino-acid sequence, 339 residues long: Probable G-protein coupled receptor 33 (339 aa).

The Extracellular portion of the chain corresponds to 1-30; sequence MDRVNSSGHVISVSPSLTNSTGVPTPAPKA. Asparagine 5 and asparagine 19 each carry an N-linked (GlcNAc...) asparagine glycan. The chain crosses the membrane as a helical span at residues 31–53; the sequence is IIAAALFMSFIVGTISNGLYLWM. Residues 54–64 are Cytoplasmic-facing; sequence LKFKMQRTVNT. The chain crosses the membrane as a helical span at residues 65-86; that stretch reads LLFFHLILSYFISTLILPFMAT. The Extracellular segment spans residues 87–103; it reads SFLQDNHWAFGSVLCKV. Cysteine 101 and cysteine 179 form a disulfide bridge. A helical membrane pass occupies residues 104–124; sequence FNSTLSVSMFASVFFLSAISV. Topologically, residues 125 to 143 are cytoplasmic; it reads DRYHLTLHPVWSQQHRTPR. A helical membrane pass occupies residues 144-165; that stretch reads WASRIALRIWILATILSIPYLV. The Extracellular portion of the chain corresponds to 166–209; it reads FRETHDDHKGRIKCQNNYIVGTNWESSEHQTLGQWIHAACFGRR. Residues 210–230 form a helical membrane-spanning segment; the sequence is FLLGFLLPFLVIVFCYKRVAT. Residues 231 to 246 lie on the Cytoplasmic side of the membrane; it reads KMKDKGLFKSSKPFKV. A helical membrane pass occupies residues 247–268; that stretch reads MLTAVVSFFVCWMPYHVHSGLV. Topologically, residues 269 to 283 are extracellular; sequence LTKSQPLPSQLTLGL. A helical membrane pass occupies residues 284–303; it reads AVVTISFNTVVSPILYLFTG. The Cytoplasmic segment spans residues 304–339; the sequence is ENFEVFKKSILALFKSTFSDSSATERTQTLNSETEI.

It belongs to the G-protein coupled receptor 1 family.

The protein localises to the cell membrane. In terms of biological role, orphan receptor; could be a chemoattractant receptor. The polypeptide is Probable G-protein coupled receptor 33 (Gpr33) (Rattus rattus (Black rat)).